The sequence spans 401 residues: Adenosine 3'-phospho 5'-phosphosulfate transporter 2 (401 aa).

N-linked (GlcNAc...) asparagine glycosylation is found at Asn12 and Asn71. The next 6 membrane-spanning stretches (helical) occupy residues 78 to 98 (LTQF…YGYL), 114 to 134 (YLTL…LQLI), 147 to 167 (MIIA…LGYL), 170 to 190 (PTQV…GVFI), 196 to 216 (NVAD…FTLA), and 223 to 243 (NFNL…AVIG). Asn254 carries an N-linked (GlcNAc...) asparagine glycan. The next 4 helical transmembrane spans lie at 267–287 (IGFV…PAVT), 298–317 (GYAF…VLAL), 324–346 (LIAV…IFFA), and 349–369 (FTFQ…LNVY).

It belongs to the nucleotide-sugar transporter family. SLC35B subfamily. Preferentially and highly expressed in colon.

Its subcellular location is the golgi apparatus membrane. The enzyme catalyses 3'-phosphoadenylyl sulfate(in) + adenosine 3',5'-bisphosphate(out) = 3'-phosphoadenylyl sulfate(out) + adenosine 3',5'-bisphosphate(in). In terms of biological role, probably functions as a 3'-phosphoadenylyl sulfate:adenosine 3',5'-bisphosphate antiporter at the Golgi membranes. Mediates the transport from the cytosol into the lumen of the Golgi of 3'-phosphoadenylyl sulfate/adenosine 3'-phospho 5'-phosphosulfate (PAPS), a universal sulfuryl donor for sulfation events that take place in that compartment. The protein is Adenosine 3'-phospho 5'-phosphosulfate transporter 2 of Homo sapiens (Human).